The primary structure comprises 204 residues: Thymidylate kinase (204 aa).

An ATP-binding site is contributed by 10–17 (GGDGAGKT).

Belongs to the thymidylate kinase family.

It carries out the reaction dTMP + ATP = dTDP + ADP. Phosphorylation of dTMP to form dTDP in both de novo and salvage pathways of dTTP synthesis. This is Thymidylate kinase from Cutibacterium acnes (strain DSM 16379 / KPA171202) (Propionibacterium acnes).